The sequence spans 266 residues: Glutamate racemase (266 aa).

Residues 9-10 (DS) and 41-42 (YG) each bind substrate. The Proton donor/acceptor role is filled by cysteine 72. Residue 73–74 (NT) coordinates substrate. Cysteine 183 functions as the Proton donor/acceptor in the catalytic mechanism. 184–185 (TH) is a binding site for substrate.

The protein belongs to the aspartate/glutamate racemases family.

The catalysed reaction is L-glutamate = D-glutamate. It functions in the pathway cell wall biogenesis; peptidoglycan biosynthesis. Its function is as follows. Provides the (R)-glutamate required for cell wall biosynthesis. In Listeria monocytogenes serotype 4b (strain CLIP80459), this protein is Glutamate racemase.